Reading from the N-terminus, the 405-residue chain is Aurora kinase A (405 aa).

2 stretches are compositionally biased toward polar residues: residues 32–82 and 91–110; these read VPSQ…QLQA and RSLN…PGNN. The disordered stretch occupies residues 32–127; it reads VPSQNPLSAN…KQKNEESKKR (96 aa). A phosphoserine mark is found at Ser-42 and Ser-52. Basic and acidic residues predominate over residues 111–127; it reads SEKELATKQKNEESKKR. One can recognise a Protein kinase domain in the interval 134–384; sequence FEIGRPLGKG…LKDVLEHPWI (251 aa). ATP contacts are provided by residues Lys-144, Lys-163, and 212–214; that span reads EYA. Residue Asp-257 is the Proton acceptor of the active site. Residue Lys-259 forms a Glycyl lysine isopeptide (Lys-Gly) (interchain with G-Cter in SUMO2) linkage. ATP-binding positions include 261–262 and Asp-275; that span reads EN. Positions 281–294 are activation segment; that stretch reads HAPSSRRTTLCGTL. 2 positions are modified to phosphothreonine: Thr-288 and Thr-289. Ser-343 is modified (phosphoserine). The segment at 385–405 is disordered; that stretch reads MANSSKPSSSQKSKDSTSKQS. The span at 396–405 shows a compositional bias: basic and acidic residues; sequence KSKDSTSKQS.

It belongs to the protein kinase superfamily. Ser/Thr protein kinase family. Aurora subfamily. In terms of assembly, part of a complex composed of NEDD9, AURKA and CTTN; within the complex NEDD9 acts as a scaffold protein and is required for complex formation. Identified in a complex with AUNIP and NIN. Interacts with FBXL7. Interacts with CPEB1, JTB, TACC1, TPX2, PPP2CA, as well as with the protein phosphatase type 1 (PP1) isoforms PPP1CA, PPP1CB and PPP1CC. Also interacts with its substrates ARHGEF2, BORA, KIF2A, PARD3, and p53/TP53. Interaction with BORA promotes phosphorylation of PLK1. Interacts with CIMAP3. Interacts with GADD45A, competing with its oligomerization. Interacts (via C-terminus) with AUNIP (via C-terminus). Interacts with FRY; this interaction facilitates AURKA-mediated PLK1 phosphorylation. Interacts with SIRT2. Interacts with MYCN; interaction is phospho-independent and triggers AURKA activation; AURKA competes with FBXW7 for binding to unphosphorylated MYCN but not for binding to phosphorylated MYCN. Interacts with HNRNPU. Interacts with AAAS. Interacts with KLHL18 and CUL3. Interacts with FOXP1. Interacts with HDAC6; AURKA-mediated phosphorylation of HDAC6 promotes deacetylation of alpha-tubulin. In terms of processing, activated by phosphorylation at Thr-289; this brings about a change in the conformation of the activation segment. Phosphorylation at Thr-289 varies during the cell cycle and is highest during M phase. Autophosphorylated at Thr-289 upon TPX2 binding. Thr-289 can be phosphorylated by several kinases, including PAK and PKA. Protein phosphatase type 1 (PP1) binds AURKA and inhibits its activity by dephosphorylating Thr-289 during mitosis. Phosphorylation at Ser-343 decreases the kinase activity. PPP2CA controls degradation by dephosphorylating Ser-52 at the end of mitosis. Ubiquitinated by the E3 ubiquitin-protein ligase complex SCF(FBXL7) during mitosis, leading to its degradation by the proteasome. Ubiquitinated by CHFR, leading to its degradation by the proteasome. Ubiquitinated by the anaphase-promoting complex (APC), leading to its degradation by the proteasome. Ubiquitinated by the CUL3-KLHL18 ligase leading to its activation at the centrosome which is required for initiating mitotic entry. Ubiquitination mediated by CUL3-KLHL18 ligase does not lead to its degradation by the proteasome.

It is found in the cytoplasm. The protein resides in the cytoskeleton. It localises to the microtubule organizing center. The protein localises to the centrosome. Its subcellular location is the spindle pole. It is found in the centriole. The protein resides in the cell projection. It localises to the neuron projection. The protein localises to the cilium. Its subcellular location is the cilium basal body. It is found in the basolateral cell membrane. The catalysed reaction is L-seryl-[protein] + ATP = O-phospho-L-seryl-[protein] + ADP + H(+). It catalyses the reaction L-threonyl-[protein] + ATP = O-phospho-L-threonyl-[protein] + ADP + H(+). Its activity is regulated as follows. Activation of CDK1, appears to be an upstream event of AURKA activation. Phosphatase inhibitor-2 (PPP1R2) and TPX2 act also as activators. Inactivated by the G2 checkpoint. Inhibited by GADD45A and p53/TP53, and through dephosphorylation by protein phosphatase type 1 (PP1). MLN8054 is also a potent and selective inhibitor. Activated during the early phase of cilia disassembly in the presence of CIMAP3. Inhibited by the small molecule inhibitor VX-680. In terms of biological role, mitotic serine/threonine kinase that contributes to the regulation of cell cycle progression. Associates with the centrosome and the spindle microtubules during mitosis and plays a critical role in various mitotic events including the establishment of mitotic spindle, centrosome duplication, centrosome separation as well as maturation, chromosomal alignment, spindle assembly checkpoint, and cytokinesis. Required for normal spindle positioning during mitosis and for the localization of NUMA1 and DCTN1 to the cell cortex during metaphase. Required for initial activation of CDK1 at centrosomes. Phosphorylates numerous target proteins, including ARHGEF2, BORA, BRCA1, CDC25B, DLGP5, HDAC6, KIF2A, LATS2, NDEL1, PARD3, PPP1R2, PLK1, RASSF1, TACC3, p53/TP53 and TPX2. Phosphorylates MCRS1 which is required for MCRS1-mediated kinetochore fiber assembly and mitotic progression. Regulates KIF2A tubulin depolymerase activity. Important for microtubule formation and/or stabilization. Required for normal axon formation. Plays a role in microtubule remodeling during neurite extension. Also acts as a key regulatory component of the p53/TP53 pathway, and particularly the checkpoint-response pathways critical for oncogenic transformation of cells, by phosphorylating and destabilizing p53/TP53. Phosphorylates its own inhibitors, the protein phosphatase type 1 (PP1) isoforms, to inhibit their activity. Inhibits cilia outgrowth. Required for cilia disassembly via phosphorylation of HDAC6 and subsequent deacetylation of alpha-tubulin. Regulates protein levels of the anti-apoptosis protein BIRC5 by suppressing the expression of the SCF(FBXL7) E3 ubiquitin-protein ligase substrate adapter FBXL7 through the phosphorylation of the transcription factor FOXP1. The protein is Aurora kinase A of Canis lupus familiaris (Dog).